The following is a 373-amino-acid chain: Dual-specificity RNA methyltransferase RlmN (373 aa).

Catalysis depends on Glu-94, which acts as the Proton acceptor. One can recognise a Radical SAM core domain in the interval 100-339 (EDDRATLCVS…VIVRKTRGDD (240 aa)). Cys-107 and Cys-344 form a disulfide bridge. [4Fe-4S] cluster is bound by residues Cys-114, Cys-118, and Cys-121. S-adenosyl-L-methionine contacts are provided by residues 168–169 (GE), Ser-200, 222–224 (SIH), and Asn-301. The active-site S-methylcysteine intermediate is Cys-344.

Belongs to the radical SAM superfamily. RlmN family. The cofactor is [4Fe-4S] cluster.

Its subcellular location is the cytoplasm. The enzyme catalyses adenosine(2503) in 23S rRNA + 2 reduced [2Fe-2S]-[ferredoxin] + 2 S-adenosyl-L-methionine = 2-methyladenosine(2503) in 23S rRNA + 5'-deoxyadenosine + L-methionine + 2 oxidized [2Fe-2S]-[ferredoxin] + S-adenosyl-L-homocysteine. It carries out the reaction adenosine(37) in tRNA + 2 reduced [2Fe-2S]-[ferredoxin] + 2 S-adenosyl-L-methionine = 2-methyladenosine(37) in tRNA + 5'-deoxyadenosine + L-methionine + 2 oxidized [2Fe-2S]-[ferredoxin] + S-adenosyl-L-homocysteine. In terms of biological role, specifically methylates position 2 of adenine 2503 in 23S rRNA and position 2 of adenine 37 in tRNAs. m2A2503 modification seems to play a crucial role in the proofreading step occurring at the peptidyl transferase center and thus would serve to optimize ribosomal fidelity. The sequence is that of Dual-specificity RNA methyltransferase RlmN from Shewanella sp. (strain MR-7).